The chain runs to 77 residues: Putative sulfur carrier protein AF_0188 (77 aa).

Catalysis depends on C11, which acts as the Cysteine persulfide intermediate.

This sequence belongs to the sulfur carrier protein TusA family.

This chain is Putative sulfur carrier protein AF_0188, found in Archaeoglobus fulgidus (strain ATCC 49558 / DSM 4304 / JCM 9628 / NBRC 100126 / VC-16).